The primary structure comprises 246 residues: tRNA (guanine-N(1)-)-methyltransferase (246 aa).

S-adenosyl-L-methionine-binding positions include Gly-117 and 137–142 (IGDYVL).

The protein belongs to the RNA methyltransferase TrmD family. As to quaternary structure, homodimer.

Its subcellular location is the cytoplasm. The enzyme catalyses guanosine(37) in tRNA + S-adenosyl-L-methionine = N(1)-methylguanosine(37) in tRNA + S-adenosyl-L-homocysteine + H(+). In terms of biological role, specifically methylates guanosine-37 in various tRNAs. This Acinetobacter baumannii (strain AB307-0294) protein is tRNA (guanine-N(1)-)-methyltransferase.